A 535-amino-acid chain; its full sequence is Atrial natriuretic peptide receptor 3 (535 aa).

An N-terminal signal peptide occupies residues methionine 1–serine 26. Positions glycine 27–arginine 40 are excised as a propeptide. Topologically, residues glutamate 41–alanine 477 are extracellular. Asparagine 81 is a glycosylation site (N-linked (GlcNAc...) asparagine). Intrachain disulfides connect cysteine 103–cysteine 131 and cysteine 208–cysteine 256. 2 N-linked (GlcNAc...) asparagine glycosylation sites follow: asparagine 288 and asparagine 389. A helical membrane pass occupies residues valine 478–phenylalanine 498. The Cytoplasmic portion of the chain corresponds to arginine 499–alanine 535.

Belongs to the ANF receptor family. Homodimer; disulfide-linked. Interacts with OSTN.

Its subcellular location is the cell membrane. Its function is as follows. Receptor for the natriuretic peptide hormones, binding with similar affinities atrial natriuretic peptide NPPA/ANP, brain natriuretic peptide NPPB/BNP, and C-type natriuretic peptide NPPC/CNP. May function as a clearance receptor for NPPA, NPPB and NPPC, regulating their local concentrations and effects. Acts as a regulator of osteoblast differentiation and bone growth by binding to its ligand osteocrin, thereby preventing binding between NPR3/NPR-C and natriuretic peptides, leading to increase cGMP production. The sequence is that of Atrial natriuretic peptide receptor 3 (Npr3) from Rattus norvegicus (Rat).